We begin with the raw amino-acid sequence, 292 residues long: mRNA export protein 33 (292 aa).

Residues 1 to 76 (MPPKKAAKGK…RKRREEEKRA (76 aa)) are disordered. Composition is skewed to basic and acidic residues over residues 9–26 (GKGDPGKAAKKDPTKKAA) and 58–76 (KDAKRQEALRKRREEEKRA). The C3H1-type zinc-finger motif lies at 134-172 (INTDIVCKFFLEACETGKYGWLWQCPNGNMTCIYKHALP).

The protein resides in the cytoplasm. In terms of biological role, functions as a component of the nuclear pore complex (NPC). NPC components, collectively referred to as nucleoporins (NUPs), can play the role of both NPC structural components and of docking or interaction partners for transiently associated nuclear transport factors. Active directional transport is assured by both, a Phe-Gly (FG) repeat affinity gradient for these transport factors across the NPC and a transport cofactor concentration gradient across the nuclear envelope. Involved in the export of mRNA from the nucleus to the cytoplasm. May play a role in mitotic spindle formation and/or function. The polypeptide is mRNA export protein 33 (mep33) (Schizosaccharomyces pombe (strain 972 / ATCC 24843) (Fission yeast)).